A 460-amino-acid polypeptide reads, in one-letter code: Argininosuccinate lyase (460 aa).

This sequence belongs to the lyase 1 family. Argininosuccinate lyase subfamily.

Its subcellular location is the cytoplasm. The enzyme catalyses 2-(N(omega)-L-arginino)succinate = fumarate + L-arginine. It participates in amino-acid biosynthesis; L-arginine biosynthesis; L-arginine from L-ornithine and carbamoyl phosphate: step 3/3. The chain is Argininosuccinate lyase from Sulfurimonas denitrificans (strain ATCC 33889 / DSM 1251) (Thiomicrospira denitrificans (strain ATCC 33889 / DSM 1251)).